Here is a 432-residue protein sequence, read N- to C-terminus: Serine hydroxymethyltransferase (432 aa).

(6S)-5,6,7,8-tetrahydrofolate-binding positions include Leu131 and 135–137; that span reads GHL. Lys240 is modified (N6-(pyridoxal phosphate)lysine).

The protein belongs to the SHMT family. Homodimer. The cofactor is pyridoxal 5'-phosphate.

The protein resides in the cytoplasm. The catalysed reaction is (6R)-5,10-methylene-5,6,7,8-tetrahydrofolate + glycine + H2O = (6S)-5,6,7,8-tetrahydrofolate + L-serine. It participates in one-carbon metabolism; tetrahydrofolate interconversion. It functions in the pathway amino-acid biosynthesis; glycine biosynthesis; glycine from L-serine: step 1/1. Functionally, catalyzes the reversible interconversion of serine and glycine with tetrahydrofolate (THF) serving as the one-carbon carrier. This reaction serves as the major source of one-carbon groups required for the biosynthesis of purines, thymidylate, methionine, and other important biomolecules. Also exhibits THF-independent aldolase activity toward beta-hydroxyamino acids, producing glycine and aldehydes, via a retro-aldol mechanism. The protein is Serine hydroxymethyltransferase of Bradyrhizobium diazoefficiens (strain JCM 10833 / BCRC 13528 / IAM 13628 / NBRC 14792 / USDA 110).